The sequence spans 389 residues: Multidrug resistance protein 1 (389 aa).

11 consecutive transmembrane segments (helical) span residues 6 to 26 (ITLTILLTNLFIAFLGIGLVI), 42 to 62 (AVGYMVACFAITQLIVSPIAG), 71 to 91 (KIMIVIGLLFFSVSEFLFGIG), 102 to 122 (MLGGISAAFIMPGVTAFIADI), 134 to 154 (YMSAAISTGFIIGPGIGGFLA), 160 to 180 (LPFFFAAAFALLAAILSILTL), 202 to 222 (IFAPMYFIAFLIILISSFGLA), 243 to 263 (IAIMITGGAIVGAITQVVLFD), 286 to 306 (VFLLTTVHSYVAILLVTVTVF), 336 to 356 (SMFTSIGNVFGPIIGGMLFDI), and 358 to 378 (VNYPFYFATVTLAIGIALTIA).

Belongs to the major facilitator superfamily. TCR/Tet family.

It localises to the cell membrane. In terms of biological role, energy-dependent efflux pump responsible for decreased drug accumulation in multi-drug-resistant cells. Probably uses a transmembrane proton gradient as the energy source. Causes the efflux of a variety of toxic substances, including such structurally diverse compounds as ethidium bromide, rhodamine and acridine dyes, tetraphenylphosphonium, puromycin, chloramphenicol, doxorubicin, and fluoroquinolone antibiotics. This chain is Multidrug resistance protein 1 (bmr), found in Bacillus subtilis (strain 168).